Here is a 173-residue protein sequence, read N- to C-terminus: Alpha-crystallin A chain (173 aa).

N-acetylmethionine is present on Met1. The required for complex formation with BFSP1 and BFSP2 stretch occupies residues 1-63 (MDIAIQHPWF…RTVLDSGISE (63 aa)). Gln6 is subject to Deamidated glutamine; partial. At Ser45 the chain carries Phosphoserine. The residue at position 50 (Gln50) is a Deamidated glutamine; partial. In terms of domain architecture, sHSP spans 52–162 (LFRTVLDSGI…GHSERAIPVS (111 aa)). N6-acetyllysine is present on residues Lys70 and Lys99. Position 100 (His100) interacts with Zn(2+). Asn101 carries the deamidated asparagine; partial modification. Zn(2+) contacts are provided by Glu102 and His107. The residue at position 122 (Ser122) is a Phosphoserine. Asn123 is modified (deamidated asparagine; partial). The interval 144–173 (PKVPSGVDAGHSERAIPVSREEKPSSAPSS) is disordered. The segment covering 153–167 (GHSERAIPVSREEKP) has biased composition (basic and acidic residues). Residue His154 coordinates Zn(2+). O-linked (GlcNAc) serine glycosylation is present at Ser162.

Belongs to the small heat shock protein (HSP20) family. In terms of assembly, heteromer composed of three CRYAA and one CRYAB subunits. Inter-subunit bridging via zinc ions enhances stability, which is crucial as there is no protein turn over in the lens. Can also form homodimers and homotetramers (dimers of dimers) which serve as the building blocks of homooligomers. Within homooligomers, the zinc-binding motif is created from residues of 3 different molecules. His-100 and Glu-102 from one molecule are ligands of the zinc ion, and His-107 and His-154 residues from additional molecules complete the site with tetrahedral coordination geometry. Part of a complex required for lens intermediate filament formation composed of BFSP1, BFSP2 and CRYAA. Acetylation at Lys-70 may increase chaperone activity. Post-translationally, undergoes age-dependent proteolytical cleavage at the C-terminus.

It localises to the cytoplasm. The protein localises to the nucleus. Contributes to the transparency and refractive index of the lens. Acts as a chaperone, preventing aggregation of various proteins under a wide range of stress conditions. Required for the correct formation of lens intermediate filaments as part of a complex composed of BFSP1, BFSP2 and CRYAA. The polypeptide is Alpha-crystallin A chain (CRYAA) (Canis lupus familiaris (Dog)).